Reading from the N-terminus, the 174-residue chain is Adenine phosphoribosyltransferase (174 aa).

The protein belongs to the purine/pyrimidine phosphoribosyltransferase family. In terms of assembly, homodimer.

The protein localises to the cytoplasm. The enzyme catalyses AMP + diphosphate = 5-phospho-alpha-D-ribose 1-diphosphate + adenine. The protein operates within purine metabolism; AMP biosynthesis via salvage pathway; AMP from adenine: step 1/1. Functionally, catalyzes a salvage reaction resulting in the formation of AMP, that is energically less costly than de novo synthesis. This Mycolicibacterium vanbaalenii (strain DSM 7251 / JCM 13017 / BCRC 16820 / KCTC 9966 / NRRL B-24157 / PYR-1) (Mycobacterium vanbaalenii) protein is Adenine phosphoribosyltransferase.